A 48-amino-acid chain; its full sequence is MVKKTIAAIFSVLVLSSVLTACNTTRGVGQDISEGGSAISGAGTKAQQ.

Positions 1-21 (MVKKTIAAIFSVLVLSSVLTA) are cleaved as a signal peptide. C22 carries N-palmitoyl cysteine lipidation. The S-diacylglycerol cysteine moiety is linked to residue C22.

It belongs to the EcnA/EcnB lipoprotein family.

Its subcellular location is the cell membrane. In terms of biological role, plays a role in the bacteriolysis. Is activated under conditions of high osmolarity by the factor sigma S. Entericidin A functions as an antidote. The chain is Entericidin B (ecnB) from Citrobacter freundii.